The chain runs to 248 residues: PF03932 family protein CutC (248 aa).

Belongs to the CutC family. Homodimer.

It localises to the cytoplasm. The chain is PF03932 family protein CutC from Escherichia coli (strain 55989 / EAEC).